A 369-amino-acid chain; its full sequence is Nuclear pore complex-interacting protein family member A6 (369 aa).

The segment at 151–170 (SMKEREHGEKERQVSEAEEN) is disordered.

It belongs to the NPIP family.

This is Nuclear pore complex-interacting protein family member A6 from Homo sapiens (Human).